A 378-amino-acid polypeptide reads, in one-letter code: Trans-enoyl reductase poxP (378 aa).

Cys62 to Lys65 serves as a coordination point for NADP(+). A substrate-binding site is contributed by Ser151–Ile158. NADP(+) is bound by residues Ser187–Thr190, Ser210–Asn213, Tyr228, and Leu275–Glu276. Residue Gly295–Ser299 coordinates substrate. Residue Thr364 to Ser365 coordinates NADP(+).

Belongs to the zinc-containing alcohol dehydrogenase family. Monomer.

It functions in the pathway secondary metabolite biosynthesis. Trans-enoyl reductase; part of the gene cluster that mediates the biosynthesis of oxaleimides, cytotoxic compounds containing an unusual disubstituted succinimide moiety. The first step of the pathway is provided by the HR-PKS poxF that serves in a new mode of collaborative biosynthesis with the PKS-NRPS poxE, by providing the olefin containing amino acid substrate via the synthesis of an ACP-bound dec-4-enoate. The cytochrome P450 monooxygenase poxM-catalyzed oxidation at the alpha-position creates the enzyme-bound 2-hydroxydec-4-enoyl-ACP thioester, which may be prone to spontaneous hydrolysis to yield 2-hydroxydec-4-enoic acid due to increased electrophilicity of the carbonyl. 2-hydroxydec-4-enoic acid can then be further oxidized by poxM to yield the alpha-ketoacid 2-oxodec-4-enoicacid, which is reductively aminated by the aminotransferase poxL to yield (S,E)-2-aminodec-4-enoic acid. The Hybrid PKS-NRPS synthetase poxE then performs condensation between the octaketide product of its PKS modules and the amino group of (S,E)-2-aminodec-4-enoic acid which is activated and incorporated by the adenylation domain. The resulting aminoacyl product can be cyclized by the Diels-Alderase PoxQ and reductively released by the reductive (R) domain of poxE to yield an aldehyde intermediate. The released aldehyde is then substrate for a Knoevenagel condensation by the hydrolyase poxO followed by an oxidation at the 5-position of the pyrrolidone ring. The presence of the olefin from the amino acid building block allows for migration of the substituted allyl group to occur. This allylic transposition reaction takes place in a conjugate addition, semipinacol-like fashion to yield a succinimide intermediate. Iterative two-electron oxidations of the C7 methyl of the succinimide intermediate to the carboxylic acid can be catalyzed by one of two remaining cytochrome P450 monooxygenasess poxC or poxD to yield oxaleimide A. Subsequent oxidation yields the maleimide scaffold oxaleimide I. Both oxaleimide A and oxaleimide I can undergo oxidative modifications in the decalin ring to yield the series of products oxaleimides B to H. The protein is Trans-enoyl reductase poxP of Penicillium oxalicum.